The chain runs to 125 residues: NADH-ubiquinone oxidoreductase chain 1 (125 aa).

The next 3 helical transmembrane spans lie at 5–25 (IFAF…VAFL), 74–94 (YLFF…WNFM), and 105–125 (LSLL…LGSG).

Belongs to the complex I subunit 1 family.

Its subcellular location is the mitochondrion inner membrane. It catalyses the reaction a ubiquinone + NADH + 5 H(+)(in) = a ubiquinol + NAD(+) + 4 H(+)(out). Functionally, core subunit of the mitochondrial membrane respiratory chain NADH dehydrogenase (Complex I) that is believed to belong to the minimal assembly required for catalysis. Complex I functions in the transfer of electrons from NADH to the respiratory chain. The immediate electron acceptor for the enzyme is believed to be ubiquinone. The protein is NADH-ubiquinone oxidoreductase chain 1 (ND1) of Arbacia lixula (Black urchin).